The sequence spans 204 residues: uncharacterized protein (204 aa).

This is an uncharacterized protein from Stylonychia lemnae (Ciliate).